Here is a 663-residue protein sequence, read N- to C-terminus: DNA topoisomerase 1 (663 aa).

A Toprim domain is found at Ser-4–Ser-137. Positions 10 and 106 each coordinate Mg(2+). In terms of domain architecture, Topo IA-type catalytic spans Asp-155–Leu-558. The tract at residues Ser-193–Gln-198 is interaction with DNA. The active-site O-(5'-phospho-DNA)-tyrosine intermediate is Tyr-306. The C4-type 1 zinc-finger motif lies at Cys-583 to Cys-610. Residues Cys-629 to Cys-653 form a C4-type 2; atypical zinc finger.

This sequence belongs to the type IA topoisomerase family. As to quaternary structure, monomer. Mg(2+) is required as a cofactor.

It carries out the reaction ATP-independent breakage of single-stranded DNA, followed by passage and rejoining.. Releases the supercoiling and torsional tension of DNA, which is introduced during the DNA replication and transcription, by transiently cleaving and rejoining one strand of the DNA duplex. Introduces a single-strand break via transesterification at a target site in duplex DNA. The scissile phosphodiester is attacked by the catalytic tyrosine of the enzyme, resulting in the formation of a DNA-(5'-phosphotyrosyl)-enzyme intermediate and the expulsion of a 3'-OH DNA strand. The free DNA strand then undergoes passage around the unbroken strand, thus removing DNA supercoils. Finally, in the religation step, the DNA 3'-OH attacks the covalent intermediate to expel the active-site tyrosine and restore the DNA phosphodiester backbone. This Archaeoglobus fulgidus (strain ATCC 49558 / DSM 4304 / JCM 9628 / NBRC 100126 / VC-16) protein is DNA topoisomerase 1.